Here is a 163-residue protein sequence, read N- to C-terminus: ADP-ribosylation factor-like protein 2-binding protein (163 aa).

It belongs to the ARL2BP family. In terms of assembly, interacts with GTP bound ARL2 and ARL3; the complex ARL2-ARL2BP as well as ARL2BP alone, binds to SLC25A4/ANT1. Interaction with ARL2 may be required for cilia basal body localization. Interacts with STAT3; interaction is enhanced with ARL2. Found in a complex with ARL2BP, ARL2 and SLC25A6. Found in a complex with ARL2, ARL2BP and SLC25A4. Interacts with STAT2, STAT3 and STAT4.

The protein localises to the cytoplasm. Its subcellular location is the mitochondrion intermembrane space. It is found in the cytoskeleton. It localises to the microtubule organizing center. The protein resides in the centrosome. The protein localises to the nucleus. Its subcellular location is the spindle. It is found in the cilium basal body. Functionally, together with ARL2, plays a role in the nuclear translocation, retention and transcriptional activity of STAT3. May play a role as an effector of ARL2. The sequence is that of ADP-ribosylation factor-like protein 2-binding protein (ARL2BP) from Pongo abelii (Sumatran orangutan).